A 177-amino-acid polypeptide reads, in one-letter code: UPF0114 protein HPP12_0190 (177 aa).

The next 4 helical transmembrane spans lie at 15 to 35 (WLLAPLCIAMSLVLVVLGYAF), 54 to 74 (LVLSALGLVDLLFMAGLVLMV), 102 to 122 (FNALKLKVSLSIVAISAIFLL), and 145 to 165 (PIFWQVVINLVFVCSALLAAV).

It belongs to the UPF0114 family.

It localises to the cell membrane. The sequence is that of UPF0114 protein HPP12_0190 from Helicobacter pylori (strain P12).